The chain runs to 283 residues: Nucleotide-binding protein ACIAD3059 (283 aa).

9-16 (GQSGSGKS) is an ATP binding site. 59–62 (DVRS) provides a ligand contact to GTP.

Belongs to the RapZ-like family.

Displays ATPase and GTPase activities. The protein is Nucleotide-binding protein ACIAD3059 of Acinetobacter baylyi (strain ATCC 33305 / BD413 / ADP1).